The chain runs to 697 residues: Polyribonucleotide nucleotidyltransferase (697 aa).

Residues aspartate 490 and aspartate 496 each contribute to the Mg(2+) site. The region spanning 557–616 (PKVVTMTIKPEKIRDVIGPGGKKINEIIDETGVKLDIEQDGTIFIGAVDKDAIARARSII) is the KH domain. The S1 motif domain maps to 626-694 (GQVYEGKVKR…KQGRVNASHK (69 aa)).

It belongs to the polyribonucleotide nucleotidyltransferase family. The cofactor is Mg(2+).

It localises to the cytoplasm. It carries out the reaction RNA(n+1) + phosphate = RNA(n) + a ribonucleoside 5'-diphosphate. In terms of biological role, involved in mRNA degradation. Catalyzes the phosphorolysis of single-stranded polyribonucleotides processively in the 3'- to 5'-direction. The chain is Polyribonucleotide nucleotidyltransferase from Staphylococcus saprophyticus subsp. saprophyticus (strain ATCC 15305 / DSM 20229 / NCIMB 8711 / NCTC 7292 / S-41).